The chain runs to 587 residues: Protein FRIGIDA-ESSENTIAL 1 (587 aa).

The segment at lysine 96–glutamate 123 adopts a C3H1-type zinc-finger fold. Disordered regions lie at residues aspartate 264–isoleucine 346, glycine 368–threonine 421, and isoleucine 467–isoleucine 492. Residues asparagine 294–leucine 304 are compositionally biased toward low complexity. Basic and acidic residues predominate over residues alanine 470 to aspartate 479.

In terms of assembly, component of the transcription activator complex FRI-C composed of FRI, FRL1, SUF4, FLX and FES1. Interacts with FLX, (via C-terminus) with FRI (via C-terminus), and with RIN1, a component of the SWR1 chromatin-remodeling complex. Expressed in root and shoot apices and vasculature.

It is found in the nucleus. Its function is as follows. Transcriptional activator involved in the FRIGIDA-mediated vernalization pathway, but not in the autonomous flowering pathway. Acts cooperatively with FRI (FRIGIDA) or FRL1 (FRIGIDA-LIKE 1) to promote FLC (FLOWERING LOCUS C) expression. Required for the stabilization of the FRI-C complex. This chain is Protein FRIGIDA-ESSENTIAL 1 (FES1), found in Arabidopsis thaliana (Mouse-ear cress).